The following is a 508-amino-acid chain: General transcription factor IIF subunit 1 (508 aa).

Residue Ala-2 is modified to N-acetylalanine. Thr-156 bears the Phosphothreonine mark. A disordered region spans residues 177 to 446 (MQQRRLKDQD…TPSSGDVQVT (270 aa)). 4 positions are modified to phosphoserine: Ser-217, Ser-218, Ser-221, and Ser-224. A compositionally biased stretch (basic residues) spans 232–251 (SKAKKKAPVTKAGRKKKKKK). Composition is skewed to acidic residues over residues 255 to 270 (DEAF…EGQE) and 303 to 325 (EQSE…EEEE). At Thr-331 the chain carries Phosphothreonine. Residues 343 to 355 (DDSDSSEESDIDS) are compositionally biased toward acidic residues. Basic residues predominate over residues 364 to 374 (AKKKTPPKRER). Phosphoserine is present on residues Ser-377, Ser-380, Ser-381, and Ser-385. Positions 378–388 (GGSSKGTSRPG) are enriched in polar residues. Thr-389 carries the post-translational modification Phosphothreonine. Over residues 389-406 (TPSAEAASTSSTLRAAAS) the composition is skewed to low complexity. Phosphoserine is present on Ser-391. An N6-acetyllysine modification is found at Lys-407. Residues 428 to 443 (GPQSLSGKSTPSSGDV) show a composition bias toward polar residues. Phosphoserine is present on residues Ser-431, Ser-433, and Ser-436. Residue Thr-437 is modified to Phosphothreonine. At Ser-440 the chain carries Phosphoserine.

This sequence belongs to the TFIIF alpha subunit family. In terms of assembly, heterodimer of an alpha and a beta subunit. Interacts with GTF2F2, CTDP1, TAF6/TAFII80 and URI1. Interacts with GTF2B (via C-terminus and preferentially via acetylated form); this interaction prevents binding of GTF2B to GTF2F2. Part of TBP-based Pol II pre-initiation complex (PIC), in which Pol II core assembles with general transcription factors and other specific initiation factors including GTF2E1, GTF2E2, GTF2F1, GTF2F2, TCEA1, ERCC2, ERCC3, GTF2H2, GTF2H3, GTF2H4, GTF2H5, GTF2A1, GTF2A2, GTF2B and TBP; this large multi-subunit PIC complex mediates DNA unwinding and targets Pol II core to the transcription start site where the first phosphodiester bond forms. Phosphorylated on Ser and other residues by TAF1 and casein kinase II-like kinases.

The protein resides in the nucleus. Its function is as follows. TFIIF is a general transcription initiation factor that binds to RNA polymerase II and helps to recruit it to the initiation complex in collaboration with TFIIB. It promotes transcription elongation. The protein is General transcription factor IIF subunit 1 (Gtf2f1) of Mus musculus (Mouse).